A 202-amino-acid chain; its full sequence is ATP-dependent Clp protease proteolytic subunit (202 aa).

The active-site Nucleophile is the Ser-106. The active site involves His-131.

This sequence belongs to the peptidase S14 family. In terms of assembly, fourteen ClpP subunits assemble into 2 heptameric rings which stack back to back to give a disk-like structure with a central cavity, resembling the structure of eukaryotic proteasomes.

The protein localises to the cytoplasm. The enzyme catalyses Hydrolysis of proteins to small peptides in the presence of ATP and magnesium. alpha-casein is the usual test substrate. In the absence of ATP, only oligopeptides shorter than five residues are hydrolyzed (such as succinyl-Leu-Tyr-|-NHMec, and Leu-Tyr-Leu-|-Tyr-Trp, in which cleavage of the -Tyr-|-Leu- and -Tyr-|-Trp bonds also occurs).. Its function is as follows. Cleaves peptides in various proteins in a process that requires ATP hydrolysis. Has a chymotrypsin-like activity. Plays a major role in the degradation of misfolded proteins. The polypeptide is ATP-dependent Clp protease proteolytic subunit (Albidiferax ferrireducens (strain ATCC BAA-621 / DSM 15236 / T118) (Rhodoferax ferrireducens)).